A 349-amino-acid polypeptide reads, in one-letter code: Kelch domain-containing protein 9 (349 aa).

Kelch repeat units lie at residues 39–89, 91–137, and 325–349; these read RFYL…PVDG, WLCV…SHTC, and QLYL…LDFI.

In terms of assembly, interacts with CCNA1.

This chain is Kelch domain-containing protein 9 (KLHDC9), found in Homo sapiens (Human).